The chain runs to 1450 residues: MEAGYAEIAAVQFNIAGDNDHKRQGVMEVTISNLFEGTLPAEGGIYDARMGTTDHHYKCITCSHQRKQCMGHPGILQMHAPVLQPLFIAEIRRWLRVICLNCGAPIVDLKRYEHLIRPKRLVEAASGQTEGKQCYVCKVIHPKIIKDSEDYFTFWVDQQGKIDKLYPQIIREIFSRVTYDTVVKLGRSKNSHPEKLVLKAIQIPPISIRPGIRLGIGSGPQSFHDINNVIQYLVRKNLLIPKDLQIVRGQKIPLNVDRNLQTIQQLYYNFLLDSVSTTATQGGTGKRGIVMGARPAPSIMRRLPRKEGRIRKSLLGSQVWSISRSTICGNSDLHLDEVGYPISFARTLQVAETVQHYNINRLMPYFLNGKRQYPGCSRVYKQITQSVHDIEGLKQDFRLEVGDILYRDVVTGDVAFFNRQPSLERSSIGVHRIVVLENPKISTFQMNVSACAWYNADFDGDQMNLWVPWSVMSRVEAELLCSVRNWFISTKSSGPVNGQVQDSTVGSFLLTRTNTPMGKNVMNKLHAMGLFQTTQTDPPCFANYSPTDLLDGKSVVSMLLKQTPINYQRAPTWYSEVYAPYMHYNKQDISTQIRNGELIEGVLDKKAVGAGSSGGIYHLISRRYGPQQALKMIFATQQLALNYVRNAGFTVSTADMLLTPEAHQEVQEIINELLLESEEINNRLLHGDIMPPIGLTTHDFYEKLQLNALKFPDRILKPIMNSINPETNGLFQMVATGAKGSNPNMIHIMAGIGQIEINTQRIQPQFSFGRTLVYYPRFALEAQAYGFICNSYIAGLTSPEFIFGEMNGRFDLINKALSTSSTGYANRKAIFGLQSCIVDYYRRVSIDTRLVQQLYGEDGLDARQLETVRFETIMLSDQELEDKFKYTGIQSPLFEEEFSRLKKDRDKYRQIFLNIENFNFSQLLTDIRQVPVNVASIVKNILLSSTSGVLPFDEKSILQKYTMVKTFCKNLPYVFINNIQERLQTPIPVYLKRAASLMRMLIRIELATVKTLNITCEQMSAILDLIRLQYTQSLINYGEAVGILAAQSVSEPLTQYMLDSHHRSVAGGTNKSGIVRPQEIFSAKPVEAEQSSEMLLRLKNPEVETNKTYAQEIANSIELITFERLILQWHLLYETYSSTKKNVMYPDFASDVEWMTDFLENHPLLQPPEDIANWCIRLELNKTTMILKSISLESIINSLRAKHPNSYIMHSVENTASGIPIIIRIYLRESAFRRSTNTRMATDEKIAVNMVDKLLNSTIRGIPGIKNANVVKLMRHRVDAQGKLARLDNIYAIKTNGTNIFGAMLDDNIDPYTIVSSSIGDTMELYGIEAARQKIISEIRTVMGDKGPNHRHLLMYADLMTRTGQVTSLEKAGLNAREPSNVLLRMALSSPVQVLTDAAVDSAVNPIYGIAAPTLMGSVPRIGTMYSDIIMDEKYITENYKSVDSMIDML.

Belongs to the RNA polymerase beta' chain family. As to quaternary structure, part of the viral DNA-directed RNA polymerase that consists of 8 polII-like subunits (RPB1, RPB2, RPB3, RPB5, RPB6, RPB7, RPB9, RPB10), a capping enzyme and a termination factor.

The protein localises to the virion. The enzyme catalyses RNA(n) + a ribonucleoside 5'-triphosphate = RNA(n+1) + diphosphate. In terms of biological role, catalytic component of the DNA-directed RNA polymerase (RNAP) that catalyzes the transcription in the cytoplasm of viral DNA into RNA using the four ribonucleoside triphosphates as substrates. Forms the polymerase active center together with RPB2. Part of the core element with the central large cleft, the clamp element that moves to open and close the cleft and the jaws that are thought to grab the incoming DNA template. This Ornithodoros (relapsing fever ticks) protein is DNA-directed RNA polymerase RPB1 homolog.